The chain runs to 484 residues: RxLR effector protein PexRD18 (484 aa).

Positions 1-20 (MSHQRILLLLMAAFFAWVSA) are cleaved as a signal peptide. A RxLR-dEER motif is present at residues 55 to 79 (RFLRLYDAEVRDTVRGDNDVDREER).

This sequence belongs to the RxLR effector family.

The protein localises to the secreted. The protein resides in the host cell membrane. In terms of biological role, effector that enhances P.infestans colonization of Nicotiana benthamiana leaves. This Phytophthora infestans (strain T30-4) (Potato late blight agent) protein is RxLR effector protein PexRD18.